The chain runs to 649 residues: Quinol oxidase subunit 1 (649 aa).

Residues 1–13 (MKFKWDEFFVTGD) are Extracellular-facing. The helical transmembrane segment at 14–34 (PLILGAQVSIALSTIAIIFVL) threads the bilayer. Residues 35–55 (TYFKKWKWLWSEWITTVDHKK) lie on the Cytoplasmic side of the membrane. A helical membrane pass occupies residues 56-76 (LGIMYIISAVIMLFRGGVDGL). Residues 77–104 (MMRAQLALPNNSFLDSNHYNEIFTTHGT) are Extracellular-facing. Position 102 (histidine 102) interacts with Fe(II)-heme a. Residues 105 to 125 (IMIIFMAMPFLIGLINVVVPL) form a helical membrane-spanning segment. Over 126-139 (QIGARDVAFPYLNN) the chain is Cytoplasmic. Residues 140-160 (LSFWTFFVGAMLFNISFVIGG) form a helical membrane-spanning segment. Residues 161-187 (SPNAGWTSYMPLASNDMSPGPGENYYL) are Extracellular-facing. Residues 188–208 (LGLQIAGIGTLMTGINFMVTI) traverse the membrane as a helical segment. The Cytoplasmic portion of the chain corresponds to 209 to 228 (LKMRTKGMTLMRMPMFTWTT). The chain crosses the membrane as a helical span at residues 229 to 249 (LITMVIIVFAFPVLTVALALL). The Extracellular segment spans residues 250–273 (SFDRLFGAHFFTLEAGGMPMLWAN). The chain crosses the membrane as a helical span at residues 274–294 (LFWIWGHPEVYIVILPAFGIF). Cu cation-binding residues include histidine 280 and tyrosine 284. Positions 280–284 (HPEVY) form a cross-link, 1'-histidyl-3'-tyrosine (His-Tyr). Topologically, residues 295–305 (SEIISSFARKQ) are cytoplasmic. The helical transmembrane segment at 306–326 (LFGYTAMVGSIIAISVLSFLV) threads the bilayer. The Extracellular segment spans residues 327–342 (WTHHFFTMGNSASVNS). Residues histidine 329 and histidine 330 each contribute to the Cu cation site. A helical membrane pass occupies residues 343–363 (FFSITTMAISIPTGVKIFNWL). Residues 364-376 (FTMYKGRISFTTP) are Cytoplasmic-facing. Residues 377–397 (MLWALAFIPNFVIGGVTGVML) traverse the membrane as a helical segment. The Extracellular segment spans residues 398–415 (AMAAADYQYHNTYFLVSH). Histidine 415 serves as a coordination point for heme a3. A helical membrane pass occupies residues 416–436 (FHYVLIAGTVFACFAGFIFWY). Histidine 417 contacts Fe(II)-heme a. Over 437-451 (PKMFGHKLNERIGKW) the chain is Cytoplasmic. The chain crosses the membrane as a helical span at residues 452-472 (FFWIFMIGFNICFFPQYFLGL). Over 473–492 (QGMPRRIYTYGPNDGWTTLN) the chain is Extracellular. A helical membrane pass occupies residues 493 to 513 (FISTVGAFMMGVGFLILCYNI). At 514 to 585 (YYSFRYSTRE…KFKKIHMPSN (72 aa)) the chain is on the cytoplasmic side. A helical membrane pass occupies residues 586–603 (SGRPFFMSVAFGIAGFGL). Topologically, residues 604-606 (VFE) are extracellular. Residues 607-624 (WYWMGVVGLIGVLLCMVL) form a helical membrane-spanning segment. At 625-649 (RSFEYDNGYYISVDEIKETERKISE) the chain is on the cytoplasmic side.

It belongs to the heme-copper respiratory oxidase family. The cofactor is Cu cation. It depends on ferriheme a as a cofactor. Requires Heme A3. as cofactor.

Its subcellular location is the cell membrane. It catalyses the reaction 2 a quinol + O2 = 2 a quinone + 2 H2O. It participates in energy metabolism; oxidative phosphorylation. Catalyzes quinol oxidation with the concomitant reduction of oxygen to water. Major component for energy conversion during vegetative growth. In Bacillus spizizenii (strain ATCC 23059 / NRRL B-14472 / W23) (Bacillus subtilis subsp. spizizenii), this protein is Quinol oxidase subunit 1 (qoxB).